The chain runs to 107 residues: Essential MCU regulator, mitochondrial (107 aa).

The transit peptide at 1–52 directs the protein to the mitochondrion; the sequence is MASGAARWLVLAPVRSGALRSGPSLRKDGDVSAAWSGSGRSLVPSRSVIVTR. The segment at 1-52 is interaction with MAIP1; sequence MASGAARWLVLAPVRSGALRSGPSLRKDGDVSAAWSGSGRSLVPSRSVIVTR. Over 54–65 the chain is Mitochondrial matrix; that stretch reads GAILPKPVKMSF. A helical transmembrane segment spans residues 66–85; sequence GLLRVFSIVIPFLYVGTLIS. Residues 81–85 carry the GXXXX[G/A/S] motif; it reads GTLIS. The Mitochondrial intermembrane segment spans residues 86 to 107; sequence KNFAALLEEHDIFVPEDDDDDD.

This sequence belongs to the SMDT1/EMRE family. As to quaternary structure, component of the uniplex complex, composed of MCU, EMRE/SMDT1, MICU1 and MICU2 (or MICU3) in a 4:4:1:1 stoichiometry. The number of EMRE/SMDT1 molecules is hovewer variable, ranging from 1 to 4 copies per uniplex complex, leading to uniplex complexes with distinct gatekeeping profiles. Interacts (via its C-terminal poly-Asp tail) with MCUR1; the interaction is direct. Unprocessed form interacts (via transit peptide) with MAIP1. Undergoes proteolytic degradation in neurons: degraded by AFG3L2 and SPG7 before SMDT1/EMRE assembly with the uniporter complex, limiting the availability of SMDT1/EMRE for MCU assembly and promoting efficient assembly of gatekeeper subunits with MCU.

It localises to the mitochondrion inner membrane. Functionally, essential regulatory subunit of the mitochondrial calcium uniporter complex (uniplex), a complex that mediates calcium uptake into mitochondria. Required to bridge the calcium-sensing proteins MICU1 with the calcium-conducting subunit MCU. Acts by mediating activation of MCU and retention of MICU1 to the MCU pore, in order to ensure tight regulation of the uniplex complex and appropriate responses to intracellular calcium signaling. This Homo sapiens (Human) protein is Essential MCU regulator, mitochondrial.